Reading from the N-terminus, the 277-residue chain is MDNNETSVDSKSINNFETKTIHGSKSMDSGIYLDSSYKMDYPEMGLCIIINNKNFHKSTGMSARNGTDVDAANLRETFMALKYEVRNKNDLTREEIMELMDSVSKEDHSKRSSFVCVILSHGDEGVIFGTNGPVDLKKLTSFFRGDYCRSLTGKPKLFIIQACRGTELDCGIETDSGTDDDMACQKIPVEADFLYAYSTAPGYYSWRNSRDGSWFIQSLCAMLKLYAHKLEFMHILTRVNRKVATEFESFSLDATFHAKKQIPCIVSMLTKELYFYH.

N-acetylmethionine is present on Met1. Propeptides lie at residues 1-9 (MDNNETSVD) and 10-28 (SKSI…KSMD). At Lys11 the chain carries N6-acetyllysine. Ser26 bears the Phosphoserine mark. Catalysis depends on residues His121 and Cys163. Cys163 is modified (S-nitrosocysteine; in inhibited form).

It belongs to the peptidase C14A family. In terms of assembly, heterotetramer that consists of two anti-parallel arranged heterodimers, each one formed by a 17 kDa (p17) and a 12 kDa (p12) subunit. Interacts with BIRC6/bruce. Cleavage by granzyme B, caspase-6, caspase-8 and caspase-10 generates the two active subunits. Additional processing of the propeptides is likely due to the autocatalytic activity of the activated protease. Active heterodimers between the small subunit of caspase-7 protease and the large subunit of caspase-3 also occur and vice versa. In terms of processing, S-nitrosylated on its catalytic site cysteine in unstimulated cell lines and denitrosylated upon activation of the Fas apoptotic pathway, associated with an increase in intracellular caspase activity. Fas therefore activates caspase-3 not only by inducing the cleavage of the caspase zymogen to its active subunits, but also by stimulating the denitrosylation of its active site thiol. Post-translationally, ubiquitinated by BIRC6; this activity is inhibited by DIABLO/SMAC. As to expression, expressed in heart, brain, liver, and muscle but not in kidney or testis.

The protein localises to the cytoplasm. It catalyses the reaction Strict requirement for an Asp residue at positions P1 and P4. It has a preferred cleavage sequence of Asp-Xaa-Xaa-Asp-|- with a hydrophobic amino-acid residue at P2 and a hydrophilic amino-acid residue at P3, although Val or Ala are also accepted at this position.. Inhibited by BIRC6; following inhibition of BIRC6-caspase binding by DIABLO/SMAC, BIRC6 is subjected to caspase cleavage, leading to an increase in active caspases. Involved in the activation cascade of caspases responsible for apoptosis execution. At the onset of apoptosis, it proteolytically cleaves poly(ADP-ribose) polymerase PARP1 at a '216-Asp-|-Gly-217' bond. Cleaves and activates sterol regulatory element binding proteins (SREBPs) between the basic helix-loop-helix leucine zipper domain and the membrane attachment domain. Cleaves and activates caspase-6, -7 and -9 (CASP6, CASP7 and CASP9, respectively). Cleaves and inactivates interleukin-18 (IL18). Triggers cell adhesion in sympathetic neurons through RET cleavage. Cleaves IL-1 beta between an Asp and an Ala, releasing the mature cytokine which is involved in a variety of inflammatory processes. Cleaves and inhibits serine/threonine-protein kinase AKT1 in response to oxidative stress. Acts as an inhibitor of type I interferon production during virus-induced apoptosis by mediating cleavage of antiviral proteins CGAS, IRF3 and MAVS, thereby preventing cytokine overproduction. Also involved in pyroptosis by mediating cleavage and activation of gasdermin-E (GSDME). Cleaves XRCC4 and phospholipid scramblase proteins XKR4, XKR8 and XKR9, leading to promote phosphatidylserine exposure on apoptotic cell surface. Cleaves BIRC6 following inhibition of BIRC6-caspase binding by DIABLO/SMAC. The polypeptide is Caspase-3 (Casp3) (Rattus norvegicus (Rat)).